We begin with the raw amino-acid sequence, 352 residues long: C-C chemokine receptor type 5 (352 aa).

At 1–30 (MDYQVSSPTYDIDYYTSEPCQKINVKQIAA) the chain is on the extracellular side. The residue at position 3 (tyrosine 3) is a Sulfotyrosine. O-linked (GalNAc...) serine glycosylation is found at serine 6 and serine 7. Tyrosine 10, tyrosine 14, and tyrosine 15 each carry sulfotyrosine. 2 disulfides stabilise this stretch: cysteine 20-cysteine 269 and cysteine 101-cysteine 178. Residues 31–58 (RLLPPLYSLVFIFGFVGNILVVLILINC) traverse the membrane as a helical segment. Residues 59–68 (KRLKSMTDIY) lie on the Cytoplasmic side of the membrane. A helical membrane pass occupies residues 69–89 (LLNLAISDLLFLLTIPFWAHY). The Extracellular segment spans residues 90–102 (AAAQWDFGNTMCQ). A helical transmembrane segment spans residues 103–124 (LLTGLYLIGFFSGIFFIILLTI). Topologically, residues 125 to 141 (DRYLAIVHAVFALKART) are cytoplasmic. A helical transmembrane segment spans residues 142–166 (VTFGLVTSVITWVVAVFASLPGIIF). The Extracellular segment spans residues 167–198 (TRSQREGLHYTCSSHFPSSQYQFWKNFQTLKI). A helical membrane pass occupies residues 199-218 (VILGLVLPLLVMVICYSGIL). Topologically, residues 219 to 235 (KTLLRCRNEKKRHRAVR) are cytoplasmic. The chain crosses the membrane as a helical span at residues 236–260 (LIFTIMIVYFLFWAPYNIVLLLNTF). Over 261 to 277 (QEFFGLNNCSSSNRLDQ) the chain is Extracellular. Residues 278–301 (AMQVTETLGMTHCCINPIIYAFVG) form a helical membrane-spanning segment. The Cytoplasmic segment spans residues 302–352 (EKFRNYLLVFFQKHLAKRFCKCCSIFQQEAPERASSVYTRSTGEQETTVGL). S-palmitoyl cysteine attachment occurs at residues cysteine 321, cysteine 323, and cysteine 324. Phosphoserine; by BARK1 is present on residues serine 336, serine 337, and serine 342.

The protein belongs to the G-protein coupled receptor 1 family. In terms of assembly, interacts with PRAF2. Efficient ligand binding to CCL3/MIP-1alpha and CCL4/MIP-1beta requires sulfation, O-glycosylation and sialic acid modifications. Glycosylation on Ser-6 is required for efficient binding of CCL4. Interacts with GRK2. Interacts with ARRB1 and ARRB2. Interacts with CNIH4. Interacts with S100A4; this interaction stimulates T-lymphocyte chemotaxis. In terms of processing, sulfated on at least 2 of the N-terminal tyrosines. Sulfation is required for efficient binding of the chemokines, CCL3 and CCL4. Post-translationally, palmitoylation in the C-terminal is important for cell surface expression. Phosphorylation on serine residues in the C-terminal is stimulated by binding CC chemokines especially by APO-RANTES. In terms of processing, O-glycosylated, but not N-glycosylated. Ser-6 appears to be the major site even if Ser-7 may be also O-glycosylated. Also sialylated glycans present which contribute to chemokine binding. Thr-16 and Ser-17 may also be glycosylated and, if so, with small moieties such as a T-antigen.

It is found in the cell membrane. Functionally, receptor for a number of inflammatory CC-chemokines including CCL3/MIP-1-alpha, CCL4/MIP-1-beta and RANTES and subsequently transduces a signal by increasing the intracellular calcium ion level. May play a role in the control of granulocytic lineage proliferation or differentiation. Participates in T-lymphocyte migration to the infection site by acting as a chemotactic receptor. This chain is C-C chemokine receptor type 5 (CCR5), found in Allochrocebus lhoesti (L'Hoest's monkey).